Here is a 409-residue protein sequence, read N- to C-terminus: Putative competence-damage inducible protein (409 aa).

Belongs to the CinA family.

The polypeptide is Putative competence-damage inducible protein (Clostridium botulinum (strain Langeland / NCTC 10281 / Type F)).